We begin with the raw amino-acid sequence, 218 residues long: Glutathione S-transferase (218 aa).

The 87-residue stretch at 2 to 88 (PVTLGYWDIR…YIARKHDLCG (87 aa)) folds into the GST N-terminal domain. Residues 7–8 (YW), 46–50 (WLNEK), 59–60 (NL), and 72–73 (QS) contribute to the glutathione site. A GST C-terminal domain is found at 90–208 (TEEERIQLDI…KSSRFSCKQI (119 aa)). Tyr-116 lines the substrate pocket.

Belongs to the GST superfamily. Mu family. In terms of assembly, homodimer.

It localises to the cytoplasm. It carries out the reaction RX + glutathione = an S-substituted glutathione + a halide anion + H(+). In terms of biological role, conjugation of reduced glutathione to a wide number of exogenous and endogenous hydrophobic electrophiles. The sequence is that of Glutathione S-transferase from Mesocricetus auratus (Golden hamster).